The sequence spans 323 residues: NADH-cytochrome b5 reductase 2 (323 aa).

A helical membrane pass occupies residues 32-48 (LAPIYVAVGLTGLGVGL). Residues 72–177 (QGWVDLKLAQ…KGPIPKYPWE (106 aa)) enclose the FAD-binding FR-type domain. 180-215 (KHKHICLIAGGTGITPMYQLARKIFKDPEDQTKVTL) lines the FAD pocket.

Belongs to the flavoprotein pyridine nucleotide cytochrome reductase family. Requires FAD as cofactor.

It is found in the mitochondrion outer membrane. The enzyme catalyses 2 Fe(III)-[cytochrome b5] + NADH = 2 Fe(II)-[cytochrome b5] + NAD(+) + H(+). Its function is as follows. May mediate the reduction of outer membrane cytochrome b5. The polypeptide is NADH-cytochrome b5 reductase 2 (mcr1) (Neosartorya fischeri (strain ATCC 1020 / DSM 3700 / CBS 544.65 / FGSC A1164 / JCM 1740 / NRRL 181 / WB 181) (Aspergillus fischerianus)).